Reading from the N-terminus, the 69-residue chain is Sec-independent protein translocase protein TatA (69 aa).

Residues 1-21 traverse the membrane as a helical segment; the sequence is MMPGPFELIIILVIVLLLFGG.

It belongs to the TatA/E family. As to quaternary structure, the Tat system comprises two distinct complexes: a TatABC complex, containing multiple copies of TatA, TatB and TatC subunits, and a separate TatA complex, containing only TatA subunits. Substrates initially bind to the TatABC complex, which probably triggers association of the separate TatA complex to form the active translocon.

The protein localises to the cell inner membrane. In terms of biological role, part of the twin-arginine translocation (Tat) system that transports large folded proteins containing a characteristic twin-arginine motif in their signal peptide across membranes. TatA could form the protein-conducting channel of the Tat system. This chain is Sec-independent protein translocase protein TatA, found in Vesicomyosocius okutanii subsp. Calyptogena okutanii (strain HA).